Here is a 501-residue protein sequence, read N- to C-terminus: MRQSREELIKRGVLKEIFDKDGELSIPNEEGALENGQPLGSGQVLSSSQVSLPALAELESGSAPGEPCSYEVLPTTEITDGTVSEESPTSNESGVLLSQDPTAKPVLLLPPKKSAAFPGDHEDTPVKQLSLLKQPPALPPKPIARIASHLTDPGAPVKLPCMPVKLSPPLPPKKVMICMPLGGPDLSSLSSYSTQKSSQQPLTQHHHTVLPSQLAAHQHQLQYGSHSQHLPSGSSTLPIHPSGCRMIEELNKTLAMTMQRLESSGLHTGDNVTKTGPGGLPDMRQVPTVVIECDDNKENVPHEADYEDSSCLYPRQEEEEEEDEDEDNSLFTSSLAMKVCRKDSLAIKLSNRPSKRELEEKNILPMQTDEERLELRQQIGTKLTRRLSQRPTAEELEQRNILKPRNEQEEQEEKREIKRRLTRKLSQRPTVEELRERKILIRFSDYVEVADAQDYDRRADKPWTRLTAADKAAIRKELNEFKSSEMEVHELSRHLTRFHRP.

An RPEL 1 repeat occupies 1–18; the sequence is MRQSREELIKRGVLKEIF. Disordered stretches follow at residues 21-46 and 295-329; these read DGEL…QVLS and DNKE…EDNS. A compositionally biased stretch (low complexity) spans 36–46; the sequence is GQPLGSGQVLS. Residues 295 to 304 are compositionally biased toward basic and acidic residues; that stretch reads DNKENVPHEA. The segment covering 317–328 has biased composition (acidic residues); that stretch reads EEEEEEDEDEDN. RPEL repeat units lie at residues 343–368, 381–406, and 419–444; these read DSLA…PMQT, TKLT…KPRN, and RRLT…IRFS. Residues 382–415 are disordered; sequence KLTRRLSQRPTAEELEQRNILKPRNEQEEQEEKR. The span at 392-415 shows a compositional bias: basic and acidic residues; it reads TAEELEQRNILKPRNEQEEQEEKR.

This sequence belongs to the phosphatase and actin regulator family. In terms of assembly, interacts (via RPEL repeats) with ACTA1. In terms of tissue distribution, expressed in the gizzard, and in neurons from central and peripheral nervous systems.

Its subcellular location is the cytoplasm. It is found in the synapse. The protein localises to the nucleus. Its function is as follows. Binds actin monomers (G actin) and plays a role in the reorganization of the actin cytoskeleton and in formation of actin stress fibers. This chain is Phosphatase and actin regulator 1 (PHACTR1), found in Gallus gallus (Chicken).